A 388-amino-acid polypeptide reads, in one-letter code: MWPWLERIASACWDRVRRYALTRRDEEDGSGSGGDADDLLLWSRDLVRHAAGEFSFAVVQANDVLEDHSQVETGAAATFIGVYDGHGGAEASRFISNHLAAHLVRLAQERGTISEDIVRNAFSATEEGFLSLVRRTHLIKPSIASIGSCCLVGIIWKGTLYLANLGDSRAVVGCLTGSNKIVAEQLTRDHNASMEEVRQELRSLHPDDSQIVVLKNGVWRIKGIIQVSRSIGDAYLKKQEFALDPSMTRFHLSEPLRRPVLTSEPSIYTRVLHSQDSFFIFASDGLWEHLTNQQAVEIVHNNPREGIARRLVKAALKEAARKREMKYNDIKKLEKGVRRFFHDDITVVVVFIDHELLQDGDESTPEISVRGFVDSGGPSSFSGLNGIS.

One can recognise a PPM-type phosphatase domain in the interval 53 to 352; that stretch reads EFSFAVVQAN…DDITVVVVFI (300 aa). Mn(2+) contacts are provided by aspartate 84, glycine 85, aspartate 284, and aspartate 343.

It belongs to the PP2C family. The cofactor is Mg(2+). Requires Mn(2+) as cofactor.

The catalysed reaction is O-phospho-L-seryl-[protein] + H2O = L-seryl-[protein] + phosphate. The enzyme catalyses O-phospho-L-threonyl-[protein] + H2O = L-threonyl-[protein] + phosphate. The sequence is that of Probable protein phosphatase 2C 43 from Oryza sativa subsp. japonica (Rice).